Reading from the N-terminus, the 496-residue chain is Sporulation-killing factor biosynthesis protein SkfC (496 aa).

Helical transmembrane passes span 1–21 (MNSLSLVFWSILAVVGLLLFI), 224–244 (VSGMLGSALAMILAILILVFM), 248–268 (TSIIFSLVLGLLIIICQSLTL), 291–311 (LLGILSTLLTGLLTGFVVFIC), 331–351 (IVQIFYGIGAGLISLGVTSLL), 399–419 (LLMIPVIWWMSGNILISIIVS), and 443–463 (FIFGCFLGVLFIKFGFICVLV).

Its subcellular location is the membrane. In terms of biological role, required for production of the bacteriocin SkfA. The polypeptide is Sporulation-killing factor biosynthesis protein SkfC (Bacillus subtilis (strain 168)).